Reading from the N-terminus, the 310-residue chain is tRNA dimethylallyltransferase (310 aa).

9–16 (GPTAVGKT) lines the ATP pocket. Residue 11–16 (TAVGKT) coordinates substrate. Positions 34–37 (DSMQ) are interaction with substrate tRNA.

It belongs to the IPP transferase family. In terms of assembly, monomer. It depends on Mg(2+) as a cofactor.

The enzyme catalyses adenosine(37) in tRNA + dimethylallyl diphosphate = N(6)-dimethylallyladenosine(37) in tRNA + diphosphate. In terms of biological role, catalyzes the transfer of a dimethylallyl group onto the adenine at position 37 in tRNAs that read codons beginning with uridine, leading to the formation of N6-(dimethylallyl)adenosine (i(6)A). In Syntrophomonas wolfei subsp. wolfei (strain DSM 2245B / Goettingen), this protein is tRNA dimethylallyltransferase.